Here is a 410-residue protein sequence, read N- to C-terminus: F-box protein At3g19890 (410 aa).

Residues 2 to 49 (TMISDLSKDLVEEILSKAPITSLGAVRSTHKQWNALSKGRLLYKAEAK) enclose the F-box domain. The segment at 386–410 (EDKCKSIKMVDTKRQRKKRKRKSKR) is disordered. The segment covering 387–398 (DKCKSIKMVDTK) has biased composition (basic and acidic residues). The span at 399 to 410 (RQRKKRKRKSKR) shows a compositional bias: basic residues.

The chain is F-box protein At3g19890 from Arabidopsis thaliana (Mouse-ear cress).